The primary structure comprises 568 residues: MAPLFILTETAAGLVLFKADKKLLKKDDVASEIETAEGINGLLKLKQFQKFDSAATALEEVASLVEGKVSPMLASLLDTLKDEKKASLAVADPKLGQAINKLPGLTLTPISDSKTNDIFRGIRDHLPSLIPGLLPEHISTMSLGLSHSLSRHKLKFSPDKVDTMIVQAISLLDDLDKELNTYAMRVKEWYGWHFPEMGKIVNDNLAYARVILKVGMRVNTSSTDLADILPEEIETAIKAAAEVSMGTEITQEDLDNIKLLAEQVVGFTEYRQQLSSYLSARMQAIAPNLTELVGDLVGARLIAHAGSLMNLAKSPASTIQILGAEKALFRALKTKHDTPKYGLIYHASLVGQATGKNKGKIARMLAAKAAIGLRVDALSDWSAQGEGKGDDVDDEERSALGVTSRAKIERHLRGLEGKPLLPRGVAVGPNGKATSAPGKWEVKEARKYNADADGLAGDEPAAAVPIREKKNKKLIEEVAEESGSDSSDDSDASEKKPKKGDKEAKKAEKAAKKAEKAAKKAAKEAKKAAKAEKEAKKSDAPEVNGSKKRKSEDDGEKSEKKKKKKSKD.

The Nop domain maps to 285–417 (IAPNLTELVG…IERHLRGLEG (133 aa)). Residues 451-568 (DADGLAGDEP…EKKKKKKSKD (118 aa)) are disordered. Residues 477–491 (EVAEESGSDSSDDSD) are compositionally biased toward acidic residues. Residues 492-540 (ASEKKPKKGDKEAKKAEKAAKKAEKAAKKAAKEAKKAAKAEKEAKKSDA) show a composition bias toward basic and acidic residues.

This sequence belongs to the NOP5/NOP56 family.

It is found in the nucleus. The protein localises to the nucleolus. Required for pre-18S rRNA processing. May bind microtubules. The sequence is that of Nucleolar protein 58 (nop58) from Botryotinia fuckeliana (strain B05.10) (Noble rot fungus).